A 401-amino-acid polypeptide reads, in one-letter code: Beta-ketoadipyl-CoA thiolase (401 aa).

Catalysis depends on Cys-90, which acts as the Acyl-thioester intermediate. Residues His-357 and Cys-387 each act as proton acceptor in the active site.

Belongs to the thiolase-like superfamily. Thiolase family.

The catalysed reaction is succinyl-CoA + acetyl-CoA = 3-oxoadipyl-CoA + CoA. It functions in the pathway aromatic compound metabolism; phenylacetate degradation. Functionally, catalyzes thiolytic cleavage of beta-ketoadipyl-CoA to succinyl-CoA and acetyl-CoA. This Escherichia coli protein is Beta-ketoadipyl-CoA thiolase (paaJ).